Consider the following 513-residue polypeptide: MLLAELAEVSRAVAATPARLEKIARLAEALRRLAPDERAVGASWLAGDLPGGRIGIGGATVRAALDAAPAEGGGPGLTVAEVDAALGRIATASGAGSAGARRRELDALLARAGAPERWFLAALLLGELRQGALEGVLADAVARAAGLPAAEVRRAAMLAGALPPVAVAALSEGAAGLARFRLRVGEPVSPMLAQTAADVEEALRALGGEAALEWKLDGARIQAHRDGGEVRVFSRSLRDVTAAVPEVVALLRAAPEPRLVLDGEAIALRADGTPEPFQVTMRRFGRRLDVERLAPDLPLTAFFFDALVAGGAELLASPERVRWAALERAVPAEQRVPRLVTRDPAEAGAFLEDALARGQEGVVAKALDAPYEAGRRGAAWLKVKRAHTLDLVVLAAEWGSGRRRGWLSNLHLGARDPSTGGFVMLGKTFKGMTDAMLAWQTERLKALATGPLDAWQVPVRPELVVEVAFDGIQSSPRYPGGLALRFARVKRYREDKRPEDADTIETVRGLYGG.

Residue Glu-213 participates in ATP binding. Lys-215 (N6-AMP-lysine intermediate) is an active-site residue. Residues Arg-220, Arg-235, Glu-264, Phe-304, Arg-376, and Lys-382 each coordinate ATP.

It belongs to the ATP-dependent DNA ligase family. The cofactor is Mg(2+).

The catalysed reaction is ATP + (deoxyribonucleotide)n-3'-hydroxyl + 5'-phospho-(deoxyribonucleotide)m = (deoxyribonucleotide)n+m + AMP + diphosphate.. Functionally, DNA ligase that seals nicks in double-stranded DNA during DNA replication, DNA recombination and DNA repair. This is Probable DNA ligase from Anaeromyxobacter dehalogenans (strain 2CP-1 / ATCC BAA-258).